We begin with the raw amino-acid sequence, 146 residues long: Ankyrin repeat-containing protein P16F5.05c (146 aa).

ANK repeat units follow at residues 1–31 (MDVD…ELSR), 35–64 (NGNS…KEVI), 70–99 (SGNT…DPHI), and 103–132 (YEKS…AKGS).

Its subcellular location is the cytoplasm. The protein resides in the nucleus. This Schizosaccharomyces pombe (strain 972 / ATCC 24843) (Fission yeast) protein is Ankyrin repeat-containing protein P16F5.05c.